A 142-amino-acid polypeptide reads, in one-letter code: Small heat shock protein IbpB (142 aa).

The sHSP domain maps to 26–137 (AGESQSFPPY…AAQRIAISER (112 aa)).

This sequence belongs to the small heat shock protein (HSP20) family. As to quaternary structure, homodimer. Forms homomultimers of about 100-150 subunits at optimal growth temperatures. Conformation changes to oligomers at high temperatures or high ionic concentrations. The decrease in size of the multimers is accompanied by an increase in chaperone activity.

The protein resides in the cytoplasm. Functionally, associates with aggregated proteins, together with IbpA, to stabilize and protect them from irreversible denaturation and extensive proteolysis during heat shock and oxidative stress. Aggregated proteins bound to the IbpAB complex are more efficiently refolded and reactivated by the ATP-dependent chaperone systems ClpB and DnaK/DnaJ/GrpE. Its activity is ATP-independent. The protein is Small heat shock protein IbpB of Shigella flexneri serotype 5b (strain 8401).